Consider the following 334-residue polypeptide: Endochitinase 3 (334 aa).

The signal sequence occupies residues 1-23; that stretch reads MRLLEFTALSSLLVLFLLLAVSA. A Chitin-binding type-1 domain is found at 24 to 65; that stretch reads EQCGKQAGGARCPSGMCCSNFGWCGNTQDYCGPGKCQSQCPS. 4 disulfides stabilise this stretch: cysteine 26-cysteine 41, cysteine 35-cysteine 47, cysteine 40-cysteine 54, and cysteine 59-cysteine 63. Residues 64 to 84 form a disordered region; it reads PSGPGPTPRPPTPTPGPSTGD. Over residues 66–79 the composition is skewed to pro residues; it reads GPGPTPRPPTPTPG. Residues proline 73, proline 74, and proline 76 each carry the 4-hydroxyproline modification. Cystine bridges form between cysteine 106–cysteine 168, cysteine 180–cysteine 188, and cysteine 287–cysteine 319. The active-site Proton donor is glutamate 150. Positions 328–334 are cleaved as a propeptide — removed in mature form; the sequence is GLLLETM.

It belongs to the glycosyl hydrolase 19 family. Chitinase class I subfamily. Post-translationally, the 4-hydroxyproline residues are not glycosylated in this plant vacuolar protein.

It localises to the vacuole. It carries out the reaction Random endo-hydrolysis of N-acetyl-beta-D-glucosaminide (1-&gt;4)-beta-linkages in chitin and chitodextrins.. Functionally, defense against chitin-containing fungal pathogens. The sequence is that of Endochitinase 3 (CHN14) from Nicotiana tabacum (Common tobacco).